Here is a 754-residue protein sequence, read N- to C-terminus: Disintegrin and metalloproteinase domain-containing protein 32 (754 aa).

An N-terminal signal peptide occupies residues 1–22; the sequence is MLGAMLHTLLLLLLAELGALLA. Phosphoserine is present on S23. The propeptide occupies 23–176; sequence SGPESQSSFL…TNYGILINKK (154 aa). N126 is a glycosylation site (N-linked (GlcNAc...) asparagine). Over 177–689 the chain is Extracellular; that stretch reads PKSPFKNLFP…ERASKNQEKK (513 aa). Residues 187–384 enclose the Peptidase M12B domain; sequence LYLEMSIVVD…EGAKCLQNKP (198 aa). 4 disulfides stabilise this stretch: C296–C379, C338–C363, C340–C345, and C454–C475. Residues N362, N469, N570, and N571 are each glycosylated (N-linked (GlcNAc...) asparagine). The Disintegrin domain occupies 391–483; the sequence is AAVCGNGKVE…NCPPDVTINN (93 aa). Positions 628–660 constitute an EGF-like domain; the sequence is QSKTCSSKCHGNGVCNSHGVCHCNAGYSPPNCQ. Cystine bridges form between C632-C642, C636-C648, and C650-C659. A helical membrane pass occupies residues 690-710; it reads WLLSLYIVLIILASVFLIGTG. The Cytoplasmic portion of the chain corresponds to 711–754; that stretch reads WKGLKQCGSKEEESMSSESKSEDSTYTYVSRSTSETSSMTSTSS. Basic and acidic residues predominate over residues 720-733; sequence KEEESMSSESKSED. The tract at residues 720-754 is disordered; it reads KEEESMSSESKSEDSTYTYVSRSTSETSSMTSTSS. The segment covering 734-754 has biased composition (low complexity); the sequence is STYTYVSRSTSETSSMTSTSS.

As to expression, expressed in sperm (at protein level). Highly expressed in the testis and weakly expressed in the epididymis, brain and heart.

The protein resides in the membrane. Functionally, may play a role in sperm development and fertilization This is a non-catalytic metalloprotease-like protein. The polypeptide is Disintegrin and metalloproteinase domain-containing protein 32 (Mus musculus (Mouse)).